Reading from the N-terminus, the 81-residue chain is uncharacterized protein (81 aa).

This sequence to M.thermoautotrophicum MTH886.

This is an uncharacterized protein from Methanocaldococcus jannaschii (strain ATCC 43067 / DSM 2661 / JAL-1 / JCM 10045 / NBRC 100440) (Methanococcus jannaschii).